Consider the following 763-residue polypeptide: MSELLSFALFLASVLIYAWKAGRNTWWFAATLTVLGLFVVLNITLFASDYFTGAGINDAVLYTLTNSLTGAGVSKYILPGIGIVLGLTAVFGALGWILRRRRHHPHHFGYSLLALLLALGSVDASPAFRQITELVKSQSRDGDPDFAAYYKEPSKTIPDPKLNLVYIYGESLERTYFDNEAFPDLTPELGALKNEGLDFSHTQQLPGTDYTIAGMVASQCGIPLFAPFEGNASASVSSFFPQNICLGDILKNSGYQNYFVQGANLRFAGKDVFLKSHGFDHLYGSEELKSVVADPHYRNDWGFYDDTVLDEAWKKFEELSRSGQRFSLFTLTVDTHHPDGFISRTCNRKKYDFDGKPNQSFSAVSCSQENIAAFINKIKASPWFKDTVIVVSSDHLAMNNTAWKYLNKQDRNNLFFVIRGDKPQQETLAVKRNTMDNGATVLDILGGDNYLGLGRSSLSGQSMSEIFLNIKEKTLAWKPDIIRLWKFPKEMKEFTIDQQKNMIAFSGSHFRLPLLLRVSDKRVEPLPESEYSAPLRFQLADFAPRDNFVWVDRCYKMAQLWAPELALSTDWCVSQGQLGGQQIVQHVDKTTWKSKTAFKDTVIDMARYKGNVDTLKIVDNDIRYKADSFIFNVAGAPEEVKQFSGISRPESWGRWSNAQLGDEVKIEYKHPLPKKFDLVITAKAYGNNASRPIPVRVGNEEQTLVLGNEVTTTTLHFDNPTDADTLVIVPPEPVSTNEGNILGHSPRKLGIGMVDIKVVEREG.

Helical transmembrane passes span 1 to 21 (MSELLSFALFLASVLIYAWKA), 26 to 46 (WWFAATLTVLGLFVVLNITLF), 77 to 97 (ILPGIGIVLGLTAVFGALGWI), and 108 to 128 (FGYSLLALLLALGSVDASPAF).

This sequence belongs to the OpgB family.

It localises to the cell inner membrane. The enzyme catalyses a phosphatidylglycerol + a membrane-derived-oligosaccharide D-glucose = a 1,2-diacyl-sn-glycerol + a membrane-derived-oligosaccharide 6-(glycerophospho)-D-glucose.. It participates in glycan metabolism; osmoregulated periplasmic glucan (OPG) biosynthesis. Transfers a phosphoglycerol residue from phosphatidylglycerol to the membrane-bound nascent glucan backbones. The protein is Phosphoglycerol transferase I of Escherichia coli (strain ATCC 8739 / DSM 1576 / NBRC 3972 / NCIMB 8545 / WDCM 00012 / Crooks).